We begin with the raw amino-acid sequence, 308 residues long: 3'(2'),5'-bisphosphate nucleotidase 1 (308 aa).

Alanine 2 carries the post-translational modification N-acetylalanine. Residue aspartate 51 is the Proton acceptor of the active site. 4 residues coordinate Mg(2+): glutamate 74, aspartate 117, valine 119, and aspartate 120. Catalysis depends on threonine 122, which acts as the Proton acceptor. Phosphothreonine is present on threonine 122. 4 residues coordinate AMP: threonine 195, histidine 198, glycine 220, and lysine 224. The residue at position 240 (serine 240) is a Phosphoserine. Lysine 244 carries the N6-succinyllysine modification. Position 247 (aspartate 247) interacts with Mg(2+).

The protein belongs to the inositol monophosphatase superfamily. The cofactor is Mg(2+). Highly expressed in heart, brain, spleen, lung, liver, skeletal muscle, kidney and testis.

It catalyses the reaction adenosine 3',5'-bisphosphate + H2O = AMP + phosphate. The catalysed reaction is adenosine 2',5'-bisphosphate + H2O = AMP + phosphate. It carries out the reaction 3'-phosphoadenylyl sulfate + H2O = adenosine 5'-phosphosulfate + phosphate. The enzyme catalyses 1D-myo-inositol 1,4-bisphosphate + H2O = 1D-myo-inositol 4-phosphate + phosphate. It catalyses the reaction 1D-myo-inositol 1,3,4-trisphosphate + H2O = 1D-myo-inositol 3,4-bisphosphate + phosphate. With respect to regulation, inhibited by Li(+) and Ca(2+), but not by Na(+). In terms of biological role, phosphatase that converts 3'(2')-phosphoadenosine 5'-phosphate (PAP) to AMP and adenosine 3'-phosphate 5'-phosphosulfate (PAPS) to adenosine 5'-phosphosulfate (APS). Is also able to hydrolyze inositol 1,4-bisphosphate (Ins(1,4)P2) and inositol 1,3,4-trisphosphate (Ins(1,3,4)P3), but is not active on AMP, 3'-AMP, fructose-1,6-bisphosphate, Ins(1)P, Ins(2)P and Ins(1,4,5)P3. Probably prevents the toxic accumulation of PAP, a compound which inhibits a variety of proteins, including PAPS-utilizing enzymes such as sulfotransferases, and RNA processing enzymes. Could also play a role in inositol recycling and phosphoinositide metabolism. This is 3'(2'),5'-bisphosphate nucleotidase 1 (Bpnt1) from Rattus norvegicus (Rat).